We begin with the raw amino-acid sequence, 121 residues long: Ribonuclease P protein component (121 aa).

It belongs to the RnpA family. In terms of assembly, consists of a catalytic RNA component (M1 or rnpB) and a protein subunit.

It carries out the reaction Endonucleolytic cleavage of RNA, removing 5'-extranucleotides from tRNA precursor.. RNaseP catalyzes the removal of the 5'-leader sequence from pre-tRNA to produce the mature 5'-terminus. It can also cleave other RNA substrates such as 4.5S RNA. The protein component plays an auxiliary but essential role in vivo by binding to the 5'-leader sequence and broadening the substrate specificity of the ribozyme. This is Ribonuclease P protein component from Rickettsia prowazekii (strain Madrid E).